The primary structure comprises 146 residues: 3-hydroxyacyl-[acyl-carrier-protein] dehydratase FabZ (146 aa).

The active site involves His48.

Belongs to the thioester dehydratase family. FabZ subfamily.

The protein localises to the cytoplasm. The catalysed reaction is a (3R)-hydroxyacyl-[ACP] = a (2E)-enoyl-[ACP] + H2O. Its function is as follows. Involved in unsaturated fatty acids biosynthesis. Catalyzes the dehydration of short chain beta-hydroxyacyl-ACPs and long chain saturated and unsaturated beta-hydroxyacyl-ACPs. The chain is 3-hydroxyacyl-[acyl-carrier-protein] dehydratase FabZ from Acetivibrio thermocellus (strain ATCC 27405 / DSM 1237 / JCM 9322 / NBRC 103400 / NCIMB 10682 / NRRL B-4536 / VPI 7372) (Clostridium thermocellum).